Here is a 335-residue protein sequence, read N- to C-terminus: Transaldolase (335 aa).

The Schiff-base intermediate with substrate role is filled by lysine 135.

It belongs to the transaldolase family. Type 1 subfamily. In terms of assembly, homodimer.

It is found in the cytoplasm. The enzyme catalyses D-sedoheptulose 7-phosphate + D-glyceraldehyde 3-phosphate = D-erythrose 4-phosphate + beta-D-fructose 6-phosphate. Its pathway is carbohydrate degradation; pentose phosphate pathway; D-glyceraldehyde 3-phosphate and beta-D-fructose 6-phosphate from D-ribose 5-phosphate and D-xylulose 5-phosphate (non-oxidative stage): step 2/3. Its function is as follows. Transaldolase is important for the balance of metabolites in the pentose-phosphate pathway. This Prochlorococcus marinus (strain SARG / CCMP1375 / SS120) protein is Transaldolase.